The sequence spans 218 residues: Adenylate kinase (218 aa).

10-15 (GAGKGT) serves as a coordination point for ATP. The interval 30–59 (STGNMLRAAVKAGTPLGLEAKKVMDAGGLV) is NMP. AMP-binding positions include Thr31, Arg36, 57-59 (GLV), 85-88 (GFPR), and Gln92. An LID region spans residues 122–159 (GRRVHPASGRSYHVRFNPPKAEGVDDVTGEPLVQRDDD). ATP is bound by residues Arg123 and 132–133 (SY). Positions 156 and 167 each coordinate AMP. ATP is bound at residue Gly203.

It belongs to the adenylate kinase family. As to quaternary structure, monomer.

It is found in the cytoplasm. It carries out the reaction AMP + ATP = 2 ADP. It participates in purine metabolism; AMP biosynthesis via salvage pathway; AMP from ADP: step 1/1. In terms of biological role, catalyzes the reversible transfer of the terminal phosphate group between ATP and AMP. Plays an important role in cellular energy homeostasis and in adenine nucleotide metabolism. This is Adenylate kinase from Bordetella parapertussis (strain 12822 / ATCC BAA-587 / NCTC 13253).